A 319-amino-acid polypeptide reads, in one-letter code: tRNA uridine(34) hydroxylase (319 aa).

Residues 124–218 (LDEDTVILDA…YGKNEETKGE (95 aa)) form the Rhodanese domain. Residue C178 is the Cysteine persulfide intermediate of the active site.

The protein belongs to the TrhO family.

It carries out the reaction uridine(34) in tRNA + AH2 + O2 = 5-hydroxyuridine(34) in tRNA + A + H2O. Functionally, catalyzes oxygen-dependent 5-hydroxyuridine (ho5U) modification at position 34 in tRNAs. In Listeria monocytogenes serovar 1/2a (strain ATCC BAA-679 / EGD-e), this protein is tRNA uridine(34) hydroxylase.